Reading from the N-terminus, the 561-residue chain is MAATSSISSSLSLNAKPNKLSNNNNNNKPHRFLRNPFLNPSSSSFSPLPASISSSSSSPSFPLRVSNPLTLLAADNDDYDEKPREECGVVGIYGDSEASRLCYLALHALQHRGQEGAGIVTVSKDKVLQTITGVGLVSEVFSESKLDQLPGDIAIGHVRYSTAGSSMLKNVQPFVAGYRFGSVGVAHNGNLVNYTKLRADLEENGSIFNTSSDTEVVLHLIAISKARPFFMRIVDACEKLQGAYSMVFVTEDKLVAVRDPHGFRPLVMGRRSNGAVVFASETCALDLIEATYEREVYPGEVLVVDKDGVKCQCLMPHPEPKQCIFEHIYFSLPNSIVFGRSVYESRHVFGEILATESPVDCDVVIAVPDSGVVAALGYAAKAGVAFQQGLIRSHYVGRTFIEPSQKIRDFGVKLKLSPVRGVLEGKRVVVVDDSIVRGTTSSKIVRLLREAGAKEVHMRIASPPIIASCYYGVDTPSSNELISNRMSVDEIRDYIGCDSLAFLSFETLKKHLGEDSRSFCYACFTGDYPVKPTEDKVKRGGDFIDDGLVGGIHNIEGGWVR.

Residues 1–27 show a composition bias toward low complexity; it reads MAATSSISSSLSLNAKPNKLSNNNNNN. Positions 1-36 are disordered; that stretch reads MAATSSISSSLSLNAKPNKLSNNNNNNKPHRFLRNP. The N-terminal 53 residues, 1–53, are a transit peptide targeting the chloroplast; sequence MAATSSISSSLSLNAKPNKLSNNNNNNKPHRFLRNPFLNPSSSSFSPLPASIS. Cys87 (nucleophile) is an active-site residue. The Glutamine amidotransferase type-2 domain occupies 87–307; the sequence is CGVVGIYGDS…PGEVLVVDKD (221 aa). The [4Fe-4S] cluster site is built by Cys323, Cys469, Cys520, and Cys523.

It in the C-terminal section; belongs to the purine/pyrimidine phosphoribosyltransferase family. Requires [4Fe-4S] cluster as cofactor. The cofactor is Mg(2+). As to expression, mostly expressed in leaves, and, to a lower extent, in cotyledons.

It localises to the plastid. It is found in the chloroplast stroma. It catalyses the reaction 5-phospho-beta-D-ribosylamine + L-glutamate + diphosphate = 5-phospho-alpha-D-ribose 1-diphosphate + L-glutamine + H2O. It participates in purine metabolism; IMP biosynthesis via de novo pathway; N(1)-(5-phospho-D-ribosyl)glycinamide from 5-phospho-alpha-D-ribose 1-diphosphate: step 1/2. Its activity is regulated as follows. Inhibited by the phenyltriazole acetic acid compound [5-(4-chlorophenyl)-1-isopropyl-1H-[1,2,4]triazol-3-yl]-acetic acid (DAS734), a bleaching herbicide. Catalyzes the first committed step of 'de novo purine biosynthesis from glutamine. Required for chloroplast biogenesis and cell division. Confers sensitivity to the phenyltriazole acetic acid compound [5-(4-chlorophenyl)-1-isopropyl-1H-[1,2,4]triazol-3-yl]-acetic acid (DAS734), a bleaching herbicide. The sequence is that of Amidophosphoribosyltransferase 2, chloroplastic (ASE2) from Arabidopsis thaliana (Mouse-ear cress).